Here is a 656-residue protein sequence, read N- to C-terminus: MASTDYSTYSQAAAQQGYSAYTAQPTQGYAQTTQAYGQQSYGTYGQPTDVSYTQAQTTATYGQTAYATSYGQPPTGYTTPTAPQAYSQPVQGYGTGAYDTTTATVTTTQASYAAQSAYGTQPAYPAYGQQPAATAPTRPQDGNKPTETSQPQSSTGGYNQPSLGYGQSNYSYPQVPGSYPMQPVTAPPSYPPTSYSSTQPTSYDQSSYSQQNTYGQPSSYGQQSSYGQQSSYGQQPPTSYPPQTGSYSQAPSQYSQQSSSYGQQSSFRQDHPSSMGVYGQESGGFSGPGENRSMSGPDNRGRGRGGFDRGGMSRGGRGGGRGGMGSAGERGGFNKPGGPMDEGPDLDLGPPVDPDEDSDNSAIYVQGLNDSVTLDDLADFFKQCGVVKMNKRTGQPMIHIYLDKETGKPKGDATVSYEDPPTAKAAVEWFDGKDFQGSKLKVSLARKKPPMNSMRGGLPPREGRGMPPPLRGGPGGPGGPGGPMGRMGGRGGDRGGFPPRGPRGSRGNPSGGGNVQHRAGDWQCPNPGCGNQNFAWRTECNQCKAPKPEGFLPPPFPPPGGDRGRGGPGGMRGGRGGLMDRGGPGGMFRGGRGGDRGGFRGGRGMDRGGFGGGRRGGPGGPPGPLMEQMGGRRGGRGGPGKMDKGEHRQERRDRPY.

The EAD (Gln/Pro/Thr-rich) stretch occupies residues 1–285; it reads MASTDYSTYS…GVYGQESGGF (285 aa). A run of 31 repeats spans residues 8-16, 17-27, 28-34, 35-42, 43-50, 51-59, 60-68, 69-75, 76-84, 85-91, 92-110, 111-116, 117-125, 126-156, 157-163, 164-170, 171-177, 178-188, 189-193, 194-201, 202-206, 207-212, 213-218, 219-224, 225-230, 231-238, 239-245, 246-252, 253-259, 260-276, and 277-285. The tract at residues 8–285 is 31 X approximate tandem repeats; that stretch reads TYSQAAAQQG…GVYGQESGGF (278 aa). Residues 123–137 are compositionally biased toward low complexity; the sequence is AYPAYGQQPAATAPT. Residues 123–360 are disordered; that stretch reads AYPAYGQQPA…PVDPDEDSDN (238 aa). The segment covering 143–172 has biased composition (polar residues); the sequence is NKPTETSQPQSSTGGYNQPSLGYGQSNYSY. The span at 192–266 shows a compositional bias: low complexity; the sequence is PTSYSSTQPT…QSSSYGQQSS (75 aa). The IQ domain occupies 256–285; that stretch reads QQSSSYGQQSSFRQDHPSSMGVYGQESGGF. A Phosphoserine; by PKC modification is found at serine 266. Arginine 300, arginine 302, arginine 304, arginine 309, arginine 314, arginine 317, and arginine 321 each carry asymmetric dimethylarginine. A compositionally biased stretch (gly residues) spans 308–335; the sequence is DRGGMSRGGRGGGRGGMGSAGERGGFNK. Low complexity predominate over residues 336–350; that stretch reads PGGPMDEGPDLDLGP. Residues 361–447 enclose the RRM domain; it reads SAIYVQGLND…SKLKVSLARK (87 aa). Lysine 439 is modified (N6-acetyllysine). Disordered regions lie at residues 448–525 and 547–656; these read KPPM…WQCP and KPEG…DRPY. Residues arginine 455 and arginine 464 each carry the asymmetric dimethylarginine modification. At arginine 471 the chain carries Asymmetric dimethylarginine; alternate. Omega-N-methylarginine; alternate is present on arginine 471. Residues 472-490 show a composition bias toward gly residues; it reads GGPGGPGGPGGPMGRMGGR. Arginine 486 carries the post-translational modification Omega-N-methylarginine. The residue at position 490 (arginine 490) is an Asymmetric dimethylarginine; by PRMT8. 3 positions are modified to asymmetric dimethylarginine: arginine 494, arginine 500, and arginine 503. Position 506 is an asymmetric dimethylarginine; alternate (arginine 506). Arginine 506 is subject to Omega-N-methylarginine; alternate. The RanBP2-type zinc-finger motif lies at 518 to 549; the sequence is RAGDWQCPNPGCGNQNFAWRTECNQCKAPKPE. The segment covering 551-560 has biased composition (pro residues); the sequence is FLPPPFPPPG. Asymmetric dimethylarginine occurs at positions 563 and 565. Positions 566–591 are enriched in gly residues; the sequence is GGPGGMRGGRGGLMDRGGPGGMFRGG. Arginine 572 is subject to Asymmetric dimethylarginine; alternate; by PRMT8. Position 572 is an omega-N-methylarginine; alternate; by PRMT8 (arginine 572). Residues arginine 575, arginine 581, arginine 589, and arginine 592 each carry the asymmetric dimethylarginine modification. Over residues 592 to 606 the composition is skewed to basic and acidic residues; that stretch reads RGGDRGGFRGGRGMD. Arginine 596 bears the Asymmetric dimethylarginine; alternate; by PRMT8 mark. Arginine 596 is modified (omega-N-methylarginine; alternate; by PRMT8). Asymmetric dimethylarginine is present on arginine 600. Arginine 603 carries the post-translational modification Asymmetric dimethylarginine; by PRMT8. Arginine 607 carries the asymmetric dimethylarginine; alternate; by PRMT8 modification. Position 607 is an omega-N-methylarginine; alternate; by PRMT8 (arginine 607). A compositionally biased stretch (gly residues) spans 607 to 618; sequence RGGFGGGRRGGP. Position 615 is an asymmetric dimethylarginine; alternate (arginine 615). Position 615 is an omega-N-methylarginine; alternate (arginine 615). Residues arginine 633 and arginine 636 each carry the asymmetric dimethylarginine modification. The Nuclear localization signal motif lies at 639–656; sequence PGKMDKGEHRQERRDRPY. Positions 641-656 are enriched in basic and acidic residues; sequence KMDKGEHRQERRDRPY.

It belongs to the RRM TET family. Binds POLR2C, SF1, calmodulin and RNA. Interacts with PTK2B/FAK2 and TDRD3. Binds calmodulin in the presence, but not in the absence, of calcium ion. Forms a complex with REC8, PRDM9, SYCP3 and SYCP1; complex formation is dependent of phosphorylated form of REC8 and requires PRDM9 bound to hotspot DNA; EWSR1 joins PRDM9 with the chromosomal axis through REC8. Post-translationally, phosphorylated; calmodulin-binding inhibits phosphorylation of Ser-266. In terms of processing, highly methylated on arginine residues. Methylation is mediated by PRMT1 and, at lower level by PRMT8. In terms of tissue distribution, ubiquitous.

The protein localises to the nucleus. It localises to the cytoplasm. It is found in the cell membrane. Binds to ssRNA containing the consensus sequence 5'-AGGUAA-3'. Might normally function as a transcriptional repressor. EWS-fusion-proteins (EFPS) may play a role in the tumorigenic process. They may disturb gene expression by mimicking, or interfering with the normal function of CTD-POLII within the transcription initiation complex. They may also contribute to an aberrant activation of the fusion protein target genes. This Homo sapiens (Human) protein is RNA-binding protein EWS (EWSR1).